A 504-amino-acid polypeptide reads, in one-letter code: Maturase K (504 aa).

It belongs to the intron maturase 2 family. MatK subfamily.

It is found in the plastid. The protein resides in the chloroplast. Functionally, usually encoded in the trnK tRNA gene intron. Probably assists in splicing its own and other chloroplast group II introns. This chain is Maturase K, found in Simmondsia chinensis (Jojoba).